Reading from the N-terminus, the 859-residue chain is MDVRRLKVNELREELQRRGLDTRGLKAELAERLLAALEAEEPEDERELEADDDPGLPGHNNEEVETEGGSELEGTAQPPPPGLQPHPEPGGYSGPDGHYVMDNITRQNQFYETPVIKQENESSYDRRPLDMEPQQQVYHPELKTEMKQEAPPSFLPPEASQLKTDRPQFQNRKRPFEENRGRGYFEHREDRRGRSPQPPAEEDEDDFDDTLVAIDTYNCDLHFKVARDRSSGYPLTIEGFAYLWSGARASYGVRRGRVCFEMKINEEISVKHLPSTEPDPHVVRIGWSLDSCSTQLGEEPFSYGYGGTGKKSTNSRFENYGDKFAENDVIGCFADFECGNDVELSFTKNGKWMGIAFRIQKEALGGQALYPHVLVKNCAVEFNFGQRAEPYCSVLPGFTFIQHLPLSERIRGTIGPKSKAECEILMMVGLPAAGKTTWAIKHAASNPSKKYNILGTNAIMDKMRVMGLRRQRNYAGRWDVLIQQATQCLNRLIQIAARKKRNYILDQTNVYGSAQRRKMRPFEGFQRKAIVICPTDEDLKDRTVKRTDEEGKDVPDHAVLEMKANFTLPDVGDFLDEVLFIELQREEADKLVRQYNEEGRKAGPPPEKRFDSRGGGFRGRGGGGGFQRYDNRGPPGGNRGGFQNRGGGGGSGGGGGNYRGGFNRSGGGGYNQNRWGNNNRDNNNSNNRGNYNRAPQQQPPPQQPPPPQPPPQQPPPPPSYSPARNPPGASSYNKNSNIPGSSANTSTPTVSSYTPPQPSYSQPPYNQGGYTQGYTAPPPPPPPPPAYNYGSYGPYNPAPYTPPPPPTAQTYPQPSYNQYQQYAQQWSQYYQNQSQWPPYYGNYDYGGYSGSTQGGTSTQ.

The segment at 1–103 is necessary for interaction with HRMT1L1; the sequence is MDVRRLKVNE…GPDGHYVMDN (103 aa). Positions 3–37 constitute an SAP domain; that stretch reads VRRLKVNELREELQRRGLDTRGLKAELAERLLAAL. The disordered stretch occupies residues 36-131; it reads ALEAEEPEDE…SSYDRRPLDM (96 aa). Acidic residues predominate over residues 38–54; sequence EAEEPEDERELEADDDP. Residues 77 to 88 are compositionally biased toward pro residues; the sequence is QPPPPGLQPHPE. Residue K117 forms a Glycyl lysine isopeptide (Lys-Gly) (interchain with G-Cter in SUMO1); alternate linkage. K117 is covalently cross-linked (Glycyl lysine isopeptide (Lys-Gly) (interchain with G-Cter in SUMO2); alternate). Positions 118–130 are enriched in basic and acidic residues; the sequence is QENESSYDRRPLD. K143 participates in a covalent cross-link: Glycyl lysine isopeptide (Lys-Gly) (interchain with G-Cter in SUMO1); alternate. A Glycyl lysine isopeptide (Lys-Gly) (interchain with G-Cter in SUMO2); alternate cross-link involves residue K143. A disordered region spans residues 146–206; that stretch reads MKQEAPPSFL…QPPAEEDEDD (61 aa). Glycyl lysine isopeptide (Lys-Gly) (interchain with G-Cter in SUMO2) cross-links involve residues K147 and K163. A compositionally biased stretch (basic and acidic residues) spans 174–193; the sequence is RPFEENRGRGYFEHREDRRG. Residues 192–389 enclose the B30.2/SPRY domain; that stretch reads RGRSPQPPAE…VEFNFGQRAE (198 aa). S195 carries the phosphoserine modification. Residue T210 is modified to Phosphothreonine. The segment at 214–859 is necessary for interaction with TP53; it reads IDTYNCDLHF…GSTQGGTSTQ (646 aa). Glycyl lysine isopeptide (Lys-Gly) (interchain with G-Cter in SUMO2) cross-links involve residues K271 and K450. Residues 457-595 are necessary for interaction with BRD7 and transcriptional activation; sequence NAIMDKMRVM…EEADKLVRQY (139 aa). The residue at position 513 (S513) is a Phosphoserine. K540 participates in a covalent cross-link: Glycyl lysine isopeptide (Lys-Gly) (interchain with G-Cter in SUMO2). A compositionally biased stretch (basic and acidic residues) spans 595 to 612; the sequence is YNEEGRKAGPPPEKRFDS. The segment at 595 to 814 is disordered; sequence YNEEGRKAGP…PPTAQTYPQP (220 aa). A run of 5 repeats spans residues 613-615, 620-622, 639-641, 645-647, and 659-661. 2 stretches are compositionally biased toward gly residues: residues 613 to 626 and 634 to 670; these read RGGG…GGGF and PPGG…GGGY. The interval 613–661 is 5 X 3 AA repeats of R-G-G; it reads RGGGFRGRGGGGGFQRYDNRGPPGGNRGGFQNRGGGGGSGGGGGNYRGG. The interval 613-661 is necessary for transcription repression; sequence RGGGFRGRGGGGGFQRYDNRGPPGGNRGGFQNRGGGGGSGGGGGNYRGG. Residue R639 is modified to Asymmetric dimethylarginine. Residues R645 and R659 each carry the asymmetric dimethylarginine; alternate modification. Omega-N-methylarginine; alternate is present on residues R645 and R659. Omega-N-methylarginine occurs at positions 664 and 674. Over residues 671–696 the composition is skewed to low complexity; it reads NQNRWGNNNRDNNNSNNRGNYNRAPQ. Over residues 697-720 the composition is skewed to pro residues; it reads QQPPPQQPPPPQPPPQQPPPPPSY. Phosphoserine is present on S721. The segment covering 728–744 has biased composition (polar residues); sequence GASSYNKNSNIPGSSAN. The span at 745 to 775 shows a compositional bias: low complexity; it reads TSTPTVSSYTPPQPSYSQPPYNQGGYTQGYT. 2 stretches are compositionally biased toward pro residues: residues 776 to 786 and 796 to 807; these read APPPPPPPPPA and NPAPYTPPPPPT.

As to quaternary structure, interacts with BRD7, PRMT2, TP53 and NXF1. Associates with histones and BRD7. Methylated.

Its subcellular location is the nucleus. In terms of biological role, acts as a basic transcriptional regulator. Represses basic transcription driven by several virus and cellular promoters. When associated with BRD7, activates transcription of glucocorticoid-responsive promoter in the absence of ligand-stimulation. Also plays a role in mRNA processing and transport. Binds avidly to poly(G) and poly(C) RNA homopolymers in vitro. In Mus musculus (Mouse), this protein is Heterogeneous nuclear ribonucleoprotein U-like protein 1 (Hnrnpul1).